The chain runs to 342 residues: Ferredoxin--NADP reductase (342 aa).

FAD is bound by residues C17, D36, Q44, Y49, I89, F124, D289, and T330.

This sequence belongs to the ferredoxin--NADP reductase type 2 family. In terms of assembly, homodimer. Requires FAD as cofactor.

The catalysed reaction is 2 reduced [2Fe-2S]-[ferredoxin] + NADP(+) + H(+) = 2 oxidized [2Fe-2S]-[ferredoxin] + NADPH. In Rhodopseudomonas palustris (strain BisB18), this protein is Ferredoxin--NADP reductase.